The chain runs to 327 residues: Tagatose 1,6-diphosphate aldolase 2 (327 aa).

Belongs to the aldolase LacD family.

It catalyses the reaction D-tagatofuranose 1,6-bisphosphate = D-glyceraldehyde 3-phosphate + dihydroxyacetone phosphate. It participates in carbohydrate metabolism; D-tagatose 6-phosphate degradation; D-glyceraldehyde 3-phosphate and glycerone phosphate from D-tagatose 6-phosphate: step 2/2. The polypeptide is Tagatose 1,6-diphosphate aldolase 2 (Streptococcus pyogenes serotype M6 (strain ATCC BAA-946 / MGAS10394)).